Here is a 391-residue protein sequence, read N- to C-terminus: Chorismate synthase (391 aa).

Arg-48 is an NADP(+) binding site. FMN is bound by residues 126 to 128 (RSS), Gly-287, 302 to 306 (KPTSS), and Arg-329.

It belongs to the chorismate synthase family. FMNH2 is required as a cofactor.

The catalysed reaction is 5-O-(1-carboxyvinyl)-3-phosphoshikimate = chorismate + phosphate. The protein operates within metabolic intermediate biosynthesis; chorismate biosynthesis; chorismate from D-erythrose 4-phosphate and phosphoenolpyruvate: step 7/7. Its function is as follows. Catalyzes the anti-1,4-elimination of the C-3 phosphate and the C-6 proR hydrogen from 5-enolpyruvylshikimate-3-phosphate (EPSP) to yield chorismate, which is the branch point compound that serves as the starting substrate for the three terminal pathways of aromatic amino acid biosynthesis. This reaction introduces a second double bond into the aromatic ring system. The polypeptide is Chorismate synthase (Sulfolobus acidocaldarius (strain ATCC 33909 / DSM 639 / JCM 8929 / NBRC 15157 / NCIMB 11770)).